Here is a 103-residue protein sequence, read N- to C-terminus: Large ribosomal subunit protein uL24 (103 aa).

The protein belongs to the universal ribosomal protein uL24 family. As to quaternary structure, part of the 50S ribosomal subunit.

One of two assembly initiator proteins, it binds directly to the 5'-end of the 23S rRNA, where it nucleates assembly of the 50S subunit. In terms of biological role, one of the proteins that surrounds the polypeptide exit tunnel on the outside of the subunit. The polypeptide is Large ribosomal subunit protein uL24 (Actinobacillus pleuropneumoniae serotype 3 (strain JL03)).